We begin with the raw amino-acid sequence, 1181 residues long: Sodium/potassium/calcium exchanger 1 (1181 aa).

Residues Met-1–Gln-419 lie on the Extracellular side of the membrane. Disordered regions lie at residues Ala-107 to Lys-232, Ser-255 to Pro-276, and Ser-300 to Thr-323. Residues Ser-124–Thr-136 are compositionally biased toward polar residues. The N-linked (GlcNAc...) asparagine glycan is linked to Asn-271. Polar residues predominate over residues Thr-301–Ala-311. A helical transmembrane segment spans residues Gly-420 to Cys-440. Topologically, residues Asp-441 to Ala-464 are cytoplasmic. The Alpha-1 repeat unit spans residues Val-461–Phe-501. The chain crosses the membrane as a helical span at residues Thr-465–Ile-485. Residues Ser-486–Gly-491 are Extracellular-facing. The helical transmembrane segment at Ile-492–Leu-512 threads the bilayer. The Cytoplasmic segment spans residues Phe-513–Asn-519. Residues Leu-520 to Leu-544 form a helical membrane-spanning segment. The Extracellular portion of the chain corresponds to Asp-545–Glu-552. A helical membrane pass occupies residues Ser-553–Trp-569. The Cytoplasmic portion of the chain corresponds to Asn-570 to Lys-989. The tract at residues Pro-598 to Pro-617 is disordered. Ser-625 is subject to Phosphoserine. Residues Gly-650–Trp-983 form a disordered region. At Thr-690 the chain carries Phosphothreonine. The span at Gly-701–Glu-715 shows a compositional bias: acidic residues. 14 repeat units span residues Glu-730–Gly-741, Glu-742–Glu-754, Glu-755–Gly-766, Glu-767–Gly-778, Glu-779–Gly-791, Glu-792–Gly-804, Glu-805–Gly-817, Glu-818–Gly-830, Glu-831–Val-843, Glu-844–Gly-856, Glu-857–Gly-869, Glu-870–Gly-881, Glu-882–Gly-893, and Glu-894–Gly-905. Composition is skewed to basic and acidic residues over residues Glu-730–Asp-750, Glu-757–Glu-775, and Ala-782–Glu-805. Positions Glu-730–Gly-905 are 14 X approximate tandem repeats. Over residues Thr-806–Glu-820 the composition is skewed to acidic residues. A compositionally biased stretch (basic and acidic residues) spans Ala-834–Gln-906. Composition is skewed to acidic residues over residues Gly-921–Cys-931 and Gly-949–Leu-979. A helical membrane pass occupies residues Gln-990–Val-1010. Residues Arg-1011–Lys-1017 lie on the Extracellular side of the membrane. A helical transmembrane segment spans residues Phe-1018–Val-1038. The Cytoplasmic segment spans residues Trp-1039 to Glu-1053. The chain crosses the membrane as a helical span at residues Ile-1054–Ile-1074. Residues Ala-1061 to Asn-1092 form an Alpha-2 repeat. At Val-1075–Asn-1092 the chain is on the extracellular side. Residues Ile-1093–Leu-1113 form a helical membrane-spanning segment. The Cytoplasmic portion of the chain corresponds to Gln-1114–Asn-1121. Residues Gly-1122 to Ala-1142 form a helical membrane-spanning segment. Topologically, residues Ser-1143 to Lys-1150 are extracellular. A helical membrane pass occupies residues Ile-1151 to Glu-1171. Residues Asp-1172–Val-1181 are Cytoplasmic-facing.

Belongs to the Ca(2+):cation antiporter (CaCA) (TC 2.A.19) family. SLC24A subfamily. The uncleaved signal sequence is required for efficient membrane targeting and proper membrane integration and topology. As to expression, highly expressed in the eye.

Its subcellular location is the cell membrane. The enzyme catalyses Ca(2+)(out) + K(+)(out) + 4 Na(+)(in) = Ca(2+)(in) + K(+)(in) + 4 Na(+)(out). In terms of biological role, calcium, potassium:sodium antiporter that transports 1 Ca(2+) and 1 K(+) in exchange for 4 Na(+). Critical component of the visual transduction cascade, controlling the calcium concentration of outer segments during light and darkness. Light causes a rapid lowering of cytosolic free calcium in the outer segment of both retinal rod and cone photoreceptors and the light-induced lowering of calcium is caused by extrusion via this protein which plays a key role in the process of light adaptation. The chain is Sodium/potassium/calcium exchanger 1 (Slc24a1) from Rattus norvegicus (Rat).